The following is a 376-amino-acid chain: Mitochondrial distribution and morphology protein 34 (376 aa).

Residues 1–194 (MSFTFNWPRF…LPGIIHRLSQ (194 aa)) enclose the SMP-LTD domain. Disordered stretches follow at residues 207-249 (SKHP…PKIV) and 286-376 (SVPP…LHPS). Residues 218–230 (EISEPGDYGEEGE) show a composition bias toward acidic residues. Positions 306–318 (VKAKRKRTYRLGG) are enriched in basic residues. Positions 350-362 (MDRYFRSYDDHSR) are enriched in basic and acidic residues.

Belongs to the MDM34 family. In terms of assembly, component of the ER-mitochondria encounter structure (ERMES) or MDM complex, composed of MMM1, MDM10, MDM12 and MDM34.

Its subcellular location is the mitochondrion outer membrane. In terms of biological role, component of the ERMES/MDM complex, which serves as a molecular tether to connect the endoplasmic reticulum (ER) and mitochondria. Components of this complex are involved in the control of mitochondrial shape and protein biogenesis, and function in nonvesicular lipid trafficking between the ER and mitochondria. MDM34 is required for the interaction of the ER-resident membrane protein MMM1 and the outer mitochondrial membrane-resident beta-barrel protein MDM10. The protein is Mitochondrial distribution and morphology protein 34 of Laccaria bicolor (strain S238N-H82 / ATCC MYA-4686) (Bicoloured deceiver).